The chain runs to 478 residues: Probable cytosolic Fe-S cluster assembly factor AGAP009023 (478 aa).

Residues Cys23, Cys69, Cys72, Cys75, Cys189, Cys245, Cys396, and Cys400 each contribute to the [4Fe-4S] cluster site.

This sequence belongs to the NARF family.

In terms of biological role, component of the cytosolic iron-sulfur (Fe/S) protein assembly machinery. Required for maturation of extramitochondrial Fe/S proteins. This is Probable cytosolic Fe-S cluster assembly factor AGAP009023 from Anopheles gambiae (African malaria mosquito).